Reading from the N-terminus, the 354-residue chain is Peptide chain release factor 1 (354 aa).

Glutamine 232 is subject to N5-methylglutamine.

This sequence belongs to the prokaryotic/mitochondrial release factor family. Methylated by PrmC. Methylation increases the termination efficiency of RF1.

It is found in the cytoplasm. Peptide chain release factor 1 directs the termination of translation in response to the peptide chain termination codons UAG and UAA. The protein is Peptide chain release factor 1 of Jannaschia sp. (strain CCS1).